We begin with the raw amino-acid sequence, 488 residues long: Glutamyl-tRNA(Gln) amidotransferase subunit A (488 aa).

Active-site charge relay system residues include K77 and S152. S176 acts as the Acyl-ester intermediate in catalysis.

The protein belongs to the amidase family. GatA subfamily. In terms of assembly, heterotrimer of A, B and C subunits.

It catalyses the reaction L-glutamyl-tRNA(Gln) + L-glutamine + ATP + H2O = L-glutaminyl-tRNA(Gln) + L-glutamate + ADP + phosphate + H(+). In terms of biological role, allows the formation of correctly charged Gln-tRNA(Gln) through the transamidation of misacylated Glu-tRNA(Gln) in organisms which lack glutaminyl-tRNA synthetase. The reaction takes place in the presence of glutamine and ATP through an activated gamma-phospho-Glu-tRNA(Gln). This Streptococcus pyogenes serotype M4 (strain MGAS10750) protein is Glutamyl-tRNA(Gln) amidotransferase subunit A.